The chain runs to 239 residues: Ribosomal RNA small subunit methyltransferase G (239 aa).

S-adenosyl-L-methionine-binding positions include G77, F82, 128–129 (AE), and R146. The tract at residues 215 to 239 (DKKRQTPKKYPRKPGTPNKTPLLEK) is disordered.

This sequence belongs to the methyltransferase superfamily. RNA methyltransferase RsmG family.

Its subcellular location is the cytoplasm. Specifically methylates the N7 position of guanine in position 535 of 16S rRNA. The chain is Ribosomal RNA small subunit methyltransferase G from Staphylococcus aureus (strain bovine RF122 / ET3-1).